The following is a 97-amino-acid chain: YcgL domain-containing protein CPS_3517 (97 aa).

The YcgL domain maps to 1 to 85; it reads MLCAIYKSAR…PQEDLLKEHK (85 aa).

This chain is YcgL domain-containing protein CPS_3517, found in Colwellia psychrerythraea (strain 34H / ATCC BAA-681) (Vibrio psychroerythus).